A 415-amino-acid chain; its full sequence is Gamma-glutamyl phosphate reductase (415 aa).

The protein belongs to the gamma-glutamyl phosphate reductase family.

It is found in the cytoplasm. The catalysed reaction is L-glutamate 5-semialdehyde + phosphate + NADP(+) = L-glutamyl 5-phosphate + NADPH + H(+). Its pathway is amino-acid biosynthesis; L-proline biosynthesis; L-glutamate 5-semialdehyde from L-glutamate: step 2/2. In terms of biological role, catalyzes the NADPH-dependent reduction of L-glutamate 5-phosphate into L-glutamate 5-semialdehyde and phosphate. The product spontaneously undergoes cyclization to form 1-pyrroline-5-carboxylate. This is Gamma-glutamyl phosphate reductase from Mycolicibacterium vanbaalenii (strain DSM 7251 / JCM 13017 / BCRC 16820 / KCTC 9966 / NRRL B-24157 / PYR-1) (Mycobacterium vanbaalenii).